The following is a 31-amino-acid chain: Cytochrome b6-f complex subunit 6 (31 aa).

The helical transmembrane segment at 3 to 23 (ILISYFCFLLIFFLFTLILFF) threads the bilayer.

This sequence belongs to the PetL family. In terms of assembly, the 4 large subunits of the cytochrome b6-f complex are cytochrome b6, subunit IV (17 kDa polypeptide, PetD), cytochrome f and the Rieske protein, while the 4 small subunits are PetG, PetL, PetM and PetN. The complex functions as a dimer.

Its subcellular location is the plastid. It is found in the chloroplast thylakoid membrane. Its function is as follows. Component of the cytochrome b6-f complex, which mediates electron transfer between photosystem II (PSII) and photosystem I (PSI), cyclic electron flow around PSI, and state transitions. PetL is important for photoautotrophic growth as well as for electron transfer efficiency and stability of the cytochrome b6-f complex. This is Cytochrome b6-f complex subunit 6 from Gnetum parvifolium (Small-leaved jointfir).